The following is a 596-amino-acid chain: 3-hydroxy-3-methylglutaryl-coenzyme A reductase 1 (596 aa).

The interval Met1–Ser29 is disordered. Transmembrane regions (helical) follow at residues Leu41–Val61 and Ala83–Val103. The segment at Gln104–Glu183 is linker. Residues Asp184 to Lys596 are catalytic. Catalysis depends on Glu278, which acts as the Charge relay system. The N-linked (GlcNAc...) asparagine glycan is linked to Asn342. Lys410 acts as the Charge relay system in catalysis. N-linked (GlcNAc...) asparagine glycosylation is present at Asn455. Asp486 functions as the Charge relay system in the catalytic mechanism. The active-site Proton donor is the His584. Asn588 carries N-linked (GlcNAc...) asparagine glycosylation.

It belongs to the HMG-CoA reductase family. In terms of tissue distribution, expressed in flower primordia and anthers.

The protein localises to the endoplasmic reticulum membrane. It catalyses the reaction (R)-mevalonate + 2 NADP(+) + CoA = (3S)-3-hydroxy-3-methylglutaryl-CoA + 2 NADPH + 2 H(+). It participates in metabolic intermediate biosynthesis; (R)-mevalonate biosynthesis; (R)-mevalonate from acetyl-CoA: step 3/3. Catalyzes the synthesis of mevalonate. The specific precursor of all isoprenoid compounds present in plants. The chain is 3-hydroxy-3-methylglutaryl-coenzyme A reductase 1 (HMG1) from Solanum tuberosum (Potato).